We begin with the raw amino-acid sequence, 416 residues long: UDP-N-acetylglucosamine 1-carboxyvinyltransferase (416 aa).

22 to 23 (KN) is a binding site for phosphoenolpyruvate. Arg-91 lines the UDP-N-acetyl-alpha-D-glucosamine pocket. The active-site Proton donor is Cys-115. Cys-115 is modified (2-(S-cysteinyl)pyruvic acid O-phosphothioketal). UDP-N-acetyl-alpha-D-glucosamine contacts are provided by residues 120 to 124 (RPIDL), Asp-305, and Ile-327.

This sequence belongs to the EPSP synthase family. MurA subfamily.

The protein resides in the cytoplasm. The enzyme catalyses phosphoenolpyruvate + UDP-N-acetyl-alpha-D-glucosamine = UDP-N-acetyl-3-O-(1-carboxyvinyl)-alpha-D-glucosamine + phosphate. The protein operates within cell wall biogenesis; peptidoglycan biosynthesis. Its function is as follows. Cell wall formation. Adds enolpyruvyl to UDP-N-acetylglucosamine. The polypeptide is UDP-N-acetylglucosamine 1-carboxyvinyltransferase (Buchnera aphidicola subsp. Acyrthosiphon pisum (strain APS) (Acyrthosiphon pisum symbiotic bacterium)).